The primary structure comprises 578 residues: Probable methylcrotonoyl-CoA carboxylase beta chain, mitochondrial (578 aa).

A mitochondrion-targeting transit peptide spans methionine 1–valine 29. A CoA carboxyltransferase N-terminal domain is found at methionine 48 to leucine 305. The segment at methionine 48 to glutamate 570 is carboxyltransferase. The CoA carboxyltransferase C-terminal domain maps to alanine 321–glutamate 570. Positions aspartate 355 to asparagine 388 are acyl-CoA binding.

Belongs to the AccD/PCCB family. In terms of tissue distribution, expressed in third instar larval ring gland (lateral and medial secretory cells and corpus cardiacum cells) and CNS.

It is found in the mitochondrion matrix. The catalysed reaction is 3-methylbut-2-enoyl-CoA + hydrogencarbonate + ATP = 3-methyl-(2E)-glutaconyl-CoA + ADP + phosphate + H(+). The protein operates within amino-acid degradation; L-leucine degradation; (S)-3-hydroxy-3-methylglutaryl-CoA from 3-isovaleryl-CoA: step 2/3. In terms of biological role, carboxyltransferase subunit of the 3-methylcrotonyl-CoA carboxylase, an enzyme that catalyzes the conversion of 3-methylcrotonyl-CoA to 3-methylglutaconyl-CoA, a critical step for leucine and isovaleric acid catabolism. Vital for adult survival. The polypeptide is Probable methylcrotonoyl-CoA carboxylase beta chain, mitochondrial (Drosophila melanogaster (Fruit fly)).